Here is a 449-residue protein sequence, read N- to C-terminus: Alpha-L-fucosidase (449 aa).

The N-terminal stretch at 1-19 (MGLLLLLSLLSACFQPRYA) is a signal peptide. Asparagine 156, asparagine 224, asparagine 362, and asparagine 375 each carry an N-linked (GlcNAc...) asparagine glycan.

It belongs to the glycosyl hydrolase 29 family. Homotetramer.

Its subcellular location is the secreted. It carries out the reaction an alpha-L-fucoside + H2O = L-fucose + an alcohol. In terms of biological role, alpha-L-fucosidase is responsible for hydrolyzing the alpha-1,6-linked fucose joined to the reducing-end N-acetylglucosamine of the carbohydrate moieties of glycoproteins. This chain is Alpha-L-fucosidase, found in Branchiostoma floridae (Florida lancelet).